We begin with the raw amino-acid sequence, 963 residues long: Vacuolar membrane protease (963 aa).

Topologically, residues Met-1–Pro-15 are cytoplasmic. The helical transmembrane segment at Trp-16–Val-36 threads the bilayer. Topologically, residues His-37–Ser-391 are vacuolar. N-linked (GlcNAc...) asparagine glycans are attached at residues Asn-111 and Asn-114. Residues His-170 and Asp-182 each coordinate Zn(2+). The Proton acceptor role is filled by Glu-216. Positions 217, 242, and 315 each coordinate Zn(2+). A helical transmembrane segment spans residues Val-392–Val-412. The Cytoplasmic segment spans residues Asp-413–Arg-441. The chain crosses the membrane as a helical span at residues Phe-442–Lys-462. Over Val-463–Tyr-473 the chain is Vacuolar. The helical transmembrane segment at Ala-474–Ala-494 threads the bilayer. Over Asp-495 to Arg-504 the chain is Cytoplasmic. Residues Ala-505–Tyr-525 form a helical membrane-spanning segment. The Vacuolar portion of the chain corresponds to Gln-526–Tyr-535. Residues Phe-536 to Phe-556 form a helical membrane-spanning segment. Residues Gly-557–Trp-668 lie on the Cytoplasmic side of the membrane. The tract at residues Ser-569 to Leu-618 is disordered. Over residues Pro-603–Thr-612 the composition is skewed to acidic residues. Residues Ile-669–Phe-689 traverse the membrane as a helical segment. Over Leu-690–Phe-705 the chain is Vacuolar. Residues Ile-706 to Ile-726 form a helical membrane-spanning segment. Residues His-727–His-732 lie on the Cytoplasmic side of the membrane. A helical transmembrane segment spans residues Ile-733–Pro-753. Over Phe-754–Leu-963 the chain is Vacuolar. N-linked (GlcNAc...) asparagine glycosylation is present at Asn-835.

This sequence belongs to the peptidase M28 family. It depends on Zn(2+) as a cofactor.

The protein localises to the vacuole membrane. May be involved in vacuolar sorting and osmoregulation. The sequence is that of Vacuolar membrane protease from Arthroderma gypseum (strain ATCC MYA-4604 / CBS 118893) (Microsporum gypseum).